The chain runs to 442 residues: tRNA-2-methylthio-N(6)-dimethylallyladenosine synthase (442 aa).

In terms of domain architecture, MTTase N-terminal spans 2–120 (KKVFIRTFGC…LPKMIVDKET (119 aa)). [4Fe-4S] cluster contacts are provided by Cys11, Cys49, Cys83, Cys157, Cys161, and Cys164. Residues 143 to 375 (RVEGGAAFVS…NEVIEAETAR (233 aa)) form the Radical SAM core domain. Residues 378-441 (QTMIGTVQRC…TFSLRGKIVE (64 aa)) form the TRAM domain.

Belongs to the methylthiotransferase family. MiaB subfamily. As to quaternary structure, monomer. [4Fe-4S] cluster serves as cofactor.

It localises to the cytoplasm. It catalyses the reaction N(6)-dimethylallyladenosine(37) in tRNA + (sulfur carrier)-SH + AH2 + 2 S-adenosyl-L-methionine = 2-methylsulfanyl-N(6)-dimethylallyladenosine(37) in tRNA + (sulfur carrier)-H + 5'-deoxyadenosine + L-methionine + A + S-adenosyl-L-homocysteine + 2 H(+). Catalyzes the methylthiolation of N6-(dimethylallyl)adenosine (i(6)A), leading to the formation of 2-methylthio-N6-(dimethylallyl)adenosine (ms(2)i(6)A) at position 37 in tRNAs that read codons beginning with uridine. This chain is tRNA-2-methylthio-N(6)-dimethylallyladenosine synthase, found in Neisseria gonorrhoeae (strain NCCP11945).